The following is a 325-amino-acid chain: UPF0285 protein MmarC5_0962 (325 aa).

It belongs to the UPF0285 family.

The polypeptide is UPF0285 protein MmarC5_0962 (Methanococcus maripaludis (strain C5 / ATCC BAA-1333)).